Consider the following 278-residue polypeptide: Release factor glutamine methyltransferase (278 aa).

S-adenosyl-L-methionine contacts are provided by residues 120-124 (GTGTG), Asp-143, and Asn-184. Residue 184-187 (NPPY) participates in substrate binding.

Belongs to the protein N5-glutamine methyltransferase family. PrmC subfamily.

It catalyses the reaction L-glutaminyl-[peptide chain release factor] + S-adenosyl-L-methionine = N(5)-methyl-L-glutaminyl-[peptide chain release factor] + S-adenosyl-L-homocysteine + H(+). Its function is as follows. Methylates the class 1 translation termination release factors RF1/PrfA and RF2/PrfB on the glutamine residue of the universally conserved GGQ motif. This chain is Release factor glutamine methyltransferase, found in Deinococcus radiodurans (strain ATCC 13939 / DSM 20539 / JCM 16871 / CCUG 27074 / LMG 4051 / NBRC 15346 / NCIMB 9279 / VKM B-1422 / R1).